Here is a 672-residue protein sequence, read N- to C-terminus: Peptidoglycan D,D-transpeptidase MrdA (672 aa).

Residues 21 to 41 form a helical membrane-spanning segment; it reads IFFAVGLVIICLLVLASRYAY. The Acyl-ester intermediate role is filled by serine 326. Positions 350, 365, 371, and 384 each coordinate Zn(2+). Positions 616–672 are disordered; the sequence is ANHQVNGGLMTAGIKPGELPSGNESASSTPATSAPTSAAASTPQATPTRPATNEVDE. Over residues 640-672 the composition is skewed to low complexity; it reads SASSTPATSAPTSAAASTPQATPTRPATNEVDE.

It belongs to the transpeptidase family. MrdA subfamily. Monomer. Zn(2+) serves as cofactor.

It localises to the cell inner membrane. It carries out the reaction Preferential cleavage: (Ac)2-L-Lys-D-Ala-|-D-Ala. Also transpeptidation of peptidyl-alanyl moieties that are N-acyl substituents of D-alanine.. The protein operates within cell wall biogenesis; peptidoglycan biosynthesis. Inhibited by the beta-lactams sulbactam and piperacillin-tazobactam. In terms of biological role, catalyzes cross-linking of the peptidoglycan cell wall. Involved in the determination of the rod shape of the cell. The polypeptide is Peptidoglycan D,D-transpeptidase MrdA (Acinetobacter baumannii (strain ATCC 19606 / DSM 30007 / JCM 6841 / CCUG 19606 / CIP 70.34 / NBRC 109757 / NCIMB 12457 / NCTC 12156 / 81)).